We begin with the raw amino-acid sequence, 89 residues long: Putative regulatory protein Dalk_1931 (89 aa).

The protein belongs to the RemA family.

This chain is Putative regulatory protein Dalk_1931, found in Desulfatibacillum aliphaticivorans.